The following is a 505-amino-acid chain: uncharacterized protein (505 aa).

His-431 acts as the Proton acceptor in catalysis.

Belongs to the GMC oxidoreductase family. Requires FAD as cofactor.

This is an uncharacterized protein from Sinorhizobium fredii (strain NBRC 101917 / NGR234).